The following is a 143-amino-acid chain: Translation initiation factor 2 subunit beta (143 aa).

It belongs to the eIF-2-beta/eIF-5 family. In terms of assembly, heterotrimer composed of an alpha, a beta and a gamma chain.

EIF-2 functions in the early steps of protein synthesis by forming a ternary complex with GTP and initiator tRNA. The sequence is that of Translation initiation factor 2 subunit beta (eif2b) from Methanocaldococcus jannaschii (strain ATCC 43067 / DSM 2661 / JAL-1 / JCM 10045 / NBRC 100440) (Methanococcus jannaschii).